The sequence spans 989 residues: DNA-binding protein SMUBP-2 (989 aa).

An N-acetylalanine modification is found at alanine 2. Residues 213-220, glutamine 402, tyrosine 441, and glutamate 570 each bind ATP; that span reads GPPGTGKT. The segment at 637-783 is SS DNA-binding; the sequence is TAFEYLDDIV…KARHITVSRK (147 aa). 3 disordered regions span residues 650-717, 765-818, and 833-869; these read YTHE…GCDR, LRHD…GQPH, and LQRQ…TKGP. Over residues 677–690 the composition is skewed to low complexity; that stretch reads EQENGQEARAAAGQ. Residues 721 to 784 enclose the R3H domain; the sequence is IDRTEHFRAM…ARHITVSRKS (64 aa). The span at 765 to 775 shows a compositional bias: basic and acidic residues; sequence LRHDSTGEGKA. A phosphoserine mark is found at serine 797 and serine 800. Residues 833–842 show a composition bias toward low complexity; that stretch reads LQRQQGSQAQ. Residues 860–864 carry the Nuclear localization signal motif; the sequence is KKKKK. An AN1-type zinc finger spans residues 885 to 934; the sequence is IKADNTCSFAKCTASTTTLGQFCMHCSRRYCLSHHLPEIHGCGEKARAHA. Residues cysteine 891, cysteine 896, cysteine 907, cysteine 910, cysteine 915, histidine 918, histidine 924, and cysteine 926 each coordinate Zn(2+). Positions 954 to 972 are enriched in basic and acidic residues; that stretch reads ALDPAKRAQLQRRLDKKLG. Positions 954–989 are disordered; it reads ALDPAKRAQLQRRLDKKLGELSSQRTSKRKEKERGT.

The protein belongs to the DNA2/NAM7 helicase family. In terms of assembly, homooligomer. Interacts with RUVBL1. Interacts with RUVBL2. Interacts with GTF3C1. Interacts with ABT1. Interacts with ribosomes. As to expression, high expression in brain and testis, moderate in heart, spleen, and kidney, and low in other tissues.

The protein localises to the nucleus. It localises to the cytoplasm. It is found in the cell projection. The protein resides in the axon. The enzyme catalyses ATP + H2O = ADP + phosphate + H(+). 5' to 3' helicase that unwinds RNA and DNA duplexes in an ATP-dependent reaction. Specific to 5'-phosphorylated single-stranded guanine-rich sequences. May play a role in RNA metabolism, ribosome biogenesis or initiation of translation. May play a role in regulation of transcription. Interacts with tRNA-Tyr. This is DNA-binding protein SMUBP-2 (IGHMBP2) from Mesocricetus auratus (Golden hamster).